A 175-amino-acid polypeptide reads, in one-letter code: Myosin regulatory light chain 2, atrial isoform (175 aa).

An N-acetylalanine modification is found at Ala2. A phosphoserine mark is found at Ser22 and Ser23. EF-hand domains lie at 32 to 67 (AQIQEFKEAFSCIDQNRDGIICKSDLRETYSQLGKV), 102 to 137 (DPEEAILSAFRLFDPSGKGVVNKDQFKQLLLTQADK), and 138 to 173 (FSPAEVEQMFALTPMDLAGNIDYKSLCYIITHGDEK). Residues Asp45, Asn47, Asp49, and Asp56 each contribute to the Ca(2+) site.

As to quaternary structure, myosin is a hexamer of 2 heavy chains and 4 light chains.

In Sus scrofa (Pig), this protein is Myosin regulatory light chain 2, atrial isoform (MYL7).